Consider the following 245-residue polypeptide: Ninjurin-A (245 aa).

Residues 1 to 170 are Extracellular-facing; the sequence is MSNLEHITLE…TSSQHPYFYP (170 aa). N-linked (GlcNAc...) asparagine glycans are attached at residues Asn19 and Asn28. Positions 32–101 are disordered; it reads HSYGGAIDGR…NVNVNVPNGG (70 aa). Residues 92 to 101 are compositionally biased toward low complexity; that stretch reads NVNVNVPNGG. The interval 135–146 is helix alpha1; that stretch reads KKTLAQGMMDLA. The tract at residues 149–165 is helix alpha2; it reads SANANQLRYVLETSSQH. A helical transmembrane segment spans residues 171-191; that stretch reads SLLFISLSIIFQIAVGVGLIL. Over 192-211 the chain is Cytoplasmic; it reads NGQYNIKNGHDICRANRINN. Residues 212 to 232 traverse the membrane as a helical segment; it reads YTVSGIFIVTVVNVLISAFTV. Topologically, residues 233–245 are extracellular; that stretch reads DRDTVPALPANTT.

This sequence belongs to the ninjurin family. Homooligomer. In terms of processing, cleaved by Mmp1 protease to generate the Secreted ninjurin-A form.

Its subcellular location is the cell membrane. It is found in the secreted. Effector of non-apoptotic necrotic cell death that mediates plasma membrane rupture (cytolysis): oligomerizes in response to death stimuli and promotes plasma membrane rupture by introducing hydrophilic faces of 2 alpha helices into the hydrophobic membrane, leading to release intracellular molecules that propagate the inflammatory response. Also acts as a homophilic transmembrane adhesion molecule that promotes cell adhesion by mediating homophilic interactions via its extracellular region. Its function is as follows. Secreted form generated by cleavage, which acts as a negative regulator of cell adhesion. Promotes the loss of cell adhesion in a cell non-autonomous manner. This Drosophila melanogaster (Fruit fly) protein is Ninjurin-A.